Consider the following 375-residue polypeptide: Hydrogenase-1 small chain (375 aa).

A signal peptide (tat-type signal) is located at residues 1-47; it reads MNTNNEETFYQAMRRKGVSRRSFLKYCSLAATSLGLGAAMTPRIAWA. The [4Fe-4S] cluster site is built by Cys64, Cys67, Cys162, Cys196, His234, Cys237, Cys262, and Cys268. Positions 277, 296, and 299 each coordinate [3Fe-4S] cluster. Residues 353–375 form a disordered region; the sequence is HNRHKQQLADAGQQSPDNEDKQA.

Belongs to the [NiFe]/[NiFeSe] hydrogenase small subunit family. In terms of assembly, heterodimer of a large and a small subunit. [4Fe-4S] cluster serves as cofactor. [3Fe-4S] cluster is required as a cofactor. In terms of processing, predicted to be exported by the Tat system. The position of the signal peptide cleavage has not been experimentally proven.

It is found in the cell membrane. The catalysed reaction is H2 + A = AH2. The protein is Hydrogenase-1 small chain (hyaA) of Citrobacter freundii.